A 597-amino-acid polypeptide reads, in one-letter code: Protein kinase C-like 3 (597 aa).

Residues 12–95 (DIKLKTRFHG…AELNIHVFVG (84 aa)) form the PB1 domain. Residues 127–177 (GHRFQGKRLNRRIQCFICHDYIWGIGRQGFRCVDCRLCVHKKCHRHVRTHC) form a Phorbol-ester/DAG-type zinc finger. Residues 181–238 (PQGPNVPVAPSSGVGSLRGGRLDTSSSTTRSGGGIDNGAFHEHEIESPGSAKDMSRST) are disordered. The region spanning 253–522 (FRLLTVIGRG…LNDMKEHDFF (270 aa)) is the Protein kinase domain. Residues 259–267 (IGRGSYAKV) and Lys282 each bind ATP. Asp377 functions as the Proton acceptor in the catalytic mechanism. The AGC-kinase C-terminal domain occupies 524 to 595 (GFIDWEALEQ…VNPLQMSRED (72 aa)).

It belongs to the protein kinase superfamily. AGC Ser/Thr protein kinase family. PKC subfamily. As to quaternary structure, interaction with par-3 required for the peripheral localization of par-6 and to form a par-3/par-6/pkc-3 complex, which is activated when cdc-42 interacts with par-6. Binds avidly to the phosphotyrosine interaction domain (PID) of a novel pkc-3 adapter protein num-1, which enables tethering and targeting of pkc-3 to the cell periphery. Mg(2+) is required as a cofactor.

The protein resides in the cytoplasm. It is found in the cytoskeleton. It catalyses the reaction L-seryl-[protein] + ATP = O-phospho-L-seryl-[protein] + ADP + H(+). The enzyme catalyses L-threonyl-[protein] + ATP = O-phospho-L-threonyl-[protein] + ADP + H(+). Required for the normal progression of embryogenesis and viability of the organism. Plays an indispensable role in establishing embryonic polarity and in recruiting and maintaining par-6 to the periphery, through interaction with par-3. Required for epithelial cell polarity in the distal spermatheca. Phosphorylates serine residues of num-1. Required for the expression of antimicrobial peptide nlp-29 in response in response to fungal infection or physical injury. The sequence is that of Protein kinase C-like 3 from Caenorhabditis briggsae.